A 231-amino-acid polypeptide reads, in one-letter code: 2-C-methyl-D-erythritol 4-phosphate cytidylyltransferase (231 aa).

It belongs to the IspD/TarI cytidylyltransferase family. IspD subfamily.

The enzyme catalyses 2-C-methyl-D-erythritol 4-phosphate + CTP + H(+) = 4-CDP-2-C-methyl-D-erythritol + diphosphate. The protein operates within isoprenoid biosynthesis; isopentenyl diphosphate biosynthesis via DXP pathway; isopentenyl diphosphate from 1-deoxy-D-xylulose 5-phosphate: step 2/6. In terms of biological role, catalyzes the formation of 4-diphosphocytidyl-2-C-methyl-D-erythritol from CTP and 2-C-methyl-D-erythritol 4-phosphate (MEP). This Bacillus licheniformis (strain ATCC 14580 / DSM 13 / JCM 2505 / CCUG 7422 / NBRC 12200 / NCIMB 9375 / NCTC 10341 / NRRL NRS-1264 / Gibson 46) protein is 2-C-methyl-D-erythritol 4-phosphate cytidylyltransferase.